The chain runs to 287 residues: Nucleotide-binding protein mma_3120 (287 aa).

ATP is bound at residue 8–15 (GISGSGKS). GTP is bound at residue 57 to 60 (DARS).

Belongs to the RapZ-like family.

Functionally, displays ATPase and GTPase activities. This Janthinobacterium sp. (strain Marseille) (Minibacterium massiliensis) protein is Nucleotide-binding protein mma_3120.